The chain runs to 449 residues: Wilms tumor protein homolog (449 aa).

The tract at residues 48 to 84 (YGSLGGPAPPPAPPPPPPPPPHSFIKQEPSWGGAEPH) is disordered. Positions 54 to 69 (PAPPPAPPPPPPPPPH) are enriched in pro residues. Glycyl lysine isopeptide (Lys-Gly) (interchain with G-Cter in SUMO) cross-links involve residues lysine 73 and lysine 177. Positions 236–244 (MTWNQMNLG) match the 9aaTAD motif. 3 C2H2-type zinc fingers span residues 323 to 347 (FMCA…SRKH), 353 to 377 (YQCD…QRRH), and 383 to 405 (FQCK…TRTH). 2 important for interaction with target DNA regions span residues 367-381 (SDQL…TGVK) and 393-401 (SRSDHLKTH). Positions 408 to 410 (KTS) match the KTS motif motif. The segment at 414 to 438 (FSCRWPSCQKKFARSDELVRHHNMH) adopts a C2H2-type 4 zinc-finger fold. Residue lysine 444 forms a Glycyl lysine isopeptide (Lys-Gly) (interchain with G-Cter in SUMO2) linkage.

This sequence belongs to the EGR C2H2-type zinc-finger protein family. In terms of assembly, interacts with ZNF224 via the zinc-finger region. Interacts with WTAP, AMER1 and SRY. Homodimer. Interacts with WTIP. Interacts with actively translating polysomes. Detected in nuclear ribonucleoprotein (mRNP) particles. Interacts with U2AF2. Interacts with HNRNPU via the zinc-finger region. Interacts with CITED2. Interacts with RBM4.

Its subcellular location is the nucleus speckle. The protein resides in the nucleus. It localises to the nucleoplasm. The protein localises to the nucleolus. It is found in the cytoplasm. Its function is as follows. Transcription factor that plays an important role in cellular development and cell survival. Recognizes and binds to the DNA sequence 5'-GCG(T/G)GGGCG-3'. Regulates the expression of numerous target genes, including EPO. Plays an essential role for development of the urogenital system. It has a tumor suppressor as well as an oncogenic role in tumor formation. Function may be isoform-specific: isoforms lacking the KTS motif may act as transcription factors. Isoforms containing the KTS motif may bind mRNA and play a role in mRNA metabolism or splicing. Isoform 1 has lower affinity for DNA, and can bind RNA. In Sus scrofa (Pig), this protein is Wilms tumor protein homolog (WT1).